A 32-amino-acid polypeptide reads, in one-letter code: Cytochrome b6-f complex subunit 7 (32 aa).

Residues Ala9–Leu27 form a helical membrane-spanning segment.

It belongs to the PetM family. The 4 large subunits of the cytochrome b6-f complex are cytochrome b6, subunit IV (17 kDa polypeptide, PetD), cytochrome f and the Rieske protein, while the 4 small subunits are PetG, PetL, PetM and PetN. The complex functions as a dimer.

The protein localises to the cellular thylakoid membrane. In terms of biological role, component of the cytochrome b6-f complex, which mediates electron transfer between photosystem II (PSII) and photosystem I (PSI), cyclic electron flow around PSI, and state transitions. The sequence is that of Cytochrome b6-f complex subunit 7 from Prochlorococcus marinus (strain MIT 9211).